Consider the following 117-residue polypeptide: Large ribosomal subunit protein bL20 (117 aa).

Belongs to the bacterial ribosomal protein bL20 family.

Its function is as follows. Binds directly to 23S ribosomal RNA and is necessary for the in vitro assembly process of the 50S ribosomal subunit. It is not involved in the protein synthesizing functions of that subunit. This chain is Large ribosomal subunit protein bL20, found in Rickettsia bellii (strain OSU 85-389).